We begin with the raw amino-acid sequence, 224 residues long: 2-C-methyl-D-erythritol 4-phosphate cytidylyltransferase (224 aa).

This sequence belongs to the IspD/TarI cytidylyltransferase family. IspD subfamily.

It carries out the reaction 2-C-methyl-D-erythritol 4-phosphate + CTP + H(+) = 4-CDP-2-C-methyl-D-erythritol + diphosphate. It participates in isoprenoid biosynthesis; isopentenyl diphosphate biosynthesis via DXP pathway; isopentenyl diphosphate from 1-deoxy-D-xylulose 5-phosphate: step 2/6. Its function is as follows. Catalyzes the formation of 4-diphosphocytidyl-2-C-methyl-D-erythritol from CTP and 2-C-methyl-D-erythritol 4-phosphate (MEP). The chain is 2-C-methyl-D-erythritol 4-phosphate cytidylyltransferase from Clostridium botulinum (strain Eklund 17B / Type B).